The primary structure comprises 328 residues: Biotin synthase (328 aa).

The Radical SAM core domain occupies 48-275 (NRIQLSKLLN…KSHVRLTAGR (228 aa)). [4Fe-4S] cluster is bound by residues cysteine 63, cysteine 67, and cysteine 70. Residues cysteine 107, cysteine 138, cysteine 198, and arginine 270 each contribute to the [2Fe-2S] cluster site.

The protein belongs to the radical SAM superfamily. Biotin synthase family. In terms of assembly, homodimer. The cofactor is [4Fe-4S] cluster. Requires [2Fe-2S] cluster as cofactor.

It catalyses the reaction (4R,5S)-dethiobiotin + (sulfur carrier)-SH + 2 reduced [2Fe-2S]-[ferredoxin] + 2 S-adenosyl-L-methionine = (sulfur carrier)-H + biotin + 2 5'-deoxyadenosine + 2 L-methionine + 2 oxidized [2Fe-2S]-[ferredoxin]. Its pathway is cofactor biosynthesis; biotin biosynthesis; biotin from 7,8-diaminononanoate: step 2/2. In terms of biological role, catalyzes the conversion of dethiobiotin (DTB) to biotin by the insertion of a sulfur atom into dethiobiotin via a radical-based mechanism. The protein is Biotin synthase of Brucella abortus (strain S19).